Reading from the N-terminus, the 465-residue chain is UDP-N-acetylmuramate--L-alanine ligase (465 aa).

Glycine 112–threonine 118 is a binding site for ATP.

It belongs to the MurCDEF family.

The protein localises to the cytoplasm. It carries out the reaction UDP-N-acetyl-alpha-D-muramate + L-alanine + ATP = UDP-N-acetyl-alpha-D-muramoyl-L-alanine + ADP + phosphate + H(+). The protein operates within cell wall biogenesis; peptidoglycan biosynthesis. In terms of biological role, cell wall formation. This Janthinobacterium sp. (strain Marseille) (Minibacterium massiliensis) protein is UDP-N-acetylmuramate--L-alanine ligase.